The chain runs to 859 residues: Leucine--tRNA ligase (859 aa).

Positions 42-52 (PYPSGRLHMGH) match the 'HIGH' region motif. The 'KMSKS' region motif lies at 618–622 (KMSKS). K621 serves as a coordination point for ATP.

The protein belongs to the class-I aminoacyl-tRNA synthetase family.

It localises to the cytoplasm. It catalyses the reaction tRNA(Leu) + L-leucine + ATP = L-leucyl-tRNA(Leu) + AMP + diphosphate. The protein is Leucine--tRNA ligase of Shewanella sp. (strain MR-7).